We begin with the raw amino-acid sequence, 319 residues long: DNA-directed RNA polymerase subunit alpha (319 aa).

Residues 1-227 are alpha N-terminal domain (alpha-NTD); that stretch reads MKEFIFPMKI…KHMNMLTNIS (227 aa). The alpha C-terminal domain (alpha-CTD) stretch occupies residues 242–319; that stretch reads LMEKLTFSIE…NIGEQRSSEV (78 aa).

It belongs to the RNA polymerase alpha chain family. Homodimer. The RNAP catalytic core consists of 2 alpha, 1 beta, 1 beta' and 1 omega subunit. When a sigma factor is associated with the core the holoenzyme is formed, which can initiate transcription.

It carries out the reaction RNA(n) + a ribonucleoside 5'-triphosphate = RNA(n+1) + diphosphate. Functionally, DNA-dependent RNA polymerase catalyzes the transcription of DNA into RNA using the four ribonucleoside triphosphates as substrates. The sequence is that of DNA-directed RNA polymerase subunit alpha from Hydrogenobaculum sp. (strain Y04AAS1).